The chain runs to 355 residues: Peptide chain release factor 1 (355 aa).

Glutamine 231 carries the N5-methylglutamine modification.

This sequence belongs to the prokaryotic/mitochondrial release factor family. Post-translationally, methylated by PrmC. Methylation increases the termination efficiency of RF1.

Its subcellular location is the cytoplasm. Functionally, peptide chain release factor 1 directs the termination of translation in response to the peptide chain termination codons UAG and UAA. This Erythrobacter litoralis (strain HTCC2594) protein is Peptide chain release factor 1.